The chain runs to 176 residues: Large ribosomal subunit protein uL16 (176 aa).

It belongs to the universal ribosomal protein uL16 family.

The polypeptide is Large ribosomal subunit protein uL16 (Halorubrum lacusprofundi (strain ATCC 49239 / DSM 5036 / JCM 8891 / ACAM 34)).